The primary structure comprises 618 residues: MPIQVLPPQLANQIAAGEVVERPASVVKELVENSLDAGATRVDIDIERGGAKLIRIRDNGCGIKKEELALALARHATSKIASLDDLEAIISLGFRGEALASISSVSRLTLTSRTAEQAEAWQAYAEGRDMDVTVKPAAHPVGTTLEVLDLFYNTPARRKFMRTEKTEFNHIDEIIRRIALARFDVTLNLSHNGKLVRQYRAVAKDGQKERRLGAICGTPFLEQALAIEWQHGDLTLRGWVADPNHTTTALTEIQYCYVNGRMMRDRLINHAIRQACEDKLGADQQPAFVLYLEIDPHQVDVNVHPAKHEVRFHQSRLVHDFIYQGVLSVLQQQTETTLPLEEIAPAPRHVPENRIAAGRNHFAVPAEPTAAREPATPRYSGGASGGNGGRQSAGGWPHAQPGYQKQQGEVYRALLQTPATSPAPEPVAPALDGHSQSFGRVLTIVGGDCALLEHAGTIQLLSLPVAERWLRQAQLTPGQSPVCAQPLLIPLRLKVSADEKAALQKAQSLLGELGIEFQSDAQHVTIRAVPLPLRQQNLQILIPELIGYLAQQTTFATVNIAQWIARNVQSEHPQWSMAQAISLLADVERLCPQLVKAPPGGLLQPVDLHSAMSALKHE.

Residues 367-381 (EPTAAREPATPRYSG) show a composition bias toward low complexity. Residues 367–402 (EPTAAREPATPRYSGGASGGNGGRQSAGGWPHAQPG) form a disordered region. Positions 382–392 (GASGGNGGRQS) are enriched in gly residues.

It belongs to the DNA mismatch repair MutL/HexB family.

In terms of biological role, this protein is involved in the repair of mismatches in DNA. It is required for dam-dependent methyl-directed DNA mismatch repair. May act as a 'molecular matchmaker', a protein that promotes the formation of a stable complex between two or more DNA-binding proteins in an ATP-dependent manner without itself being part of a final effector complex. The protein is DNA mismatch repair protein MutL of Salmonella gallinarum (strain 287/91 / NCTC 13346).